The following is a 475-amino-acid chain: Sulfate adenylyltransferase subunit 1 (475 aa).

The 215-residue stretch at 25-239 (KSLLRFLTCG…EVLETVEIQR (215 aa)) folds into the tr-type G domain. The tract at residues 34 to 41 (GSVDDGKS) is G1. 34-41 (GSVDDGKS) serves as a coordination point for GTP. Residues 92-96 (GITID) form a G2 region. Residues 113 to 116 (DTPG) are G3. Residues 113-117 (DTPGH) and 168-171 (NKMD) contribute to the GTP site. The interval 168-171 (NKMD) is G4. The segment at 206–208 (SAL) is G5.

It belongs to the TRAFAC class translation factor GTPase superfamily. Classic translation factor GTPase family. CysN/NodQ subfamily. In terms of assembly, heterodimer composed of CysD, the smaller subunit, and CysN.

The enzyme catalyses sulfate + ATP + H(+) = adenosine 5'-phosphosulfate + diphosphate. Its pathway is sulfur metabolism; hydrogen sulfide biosynthesis; sulfite from sulfate: step 1/3. Its function is as follows. With CysD forms the ATP sulfurylase (ATPS) that catalyzes the adenylation of sulfate producing adenosine 5'-phosphosulfate (APS) and diphosphate, the first enzymatic step in sulfur assimilation pathway. APS synthesis involves the formation of a high-energy phosphoric-sulfuric acid anhydride bond driven by GTP hydrolysis by CysN coupled to ATP hydrolysis by CysD. The sequence is that of Sulfate adenylyltransferase subunit 1 from Citrobacter koseri (strain ATCC BAA-895 / CDC 4225-83 / SGSC4696).